The sequence spans 344 residues: Cell division protein ZipA (344 aa).

The Periplasmic portion of the chain corresponds to 1-6 (MEDLQL). The chain crosses the membrane as a helical span at residues 7–27 (VLFVLGAIAIVAVLVHGFWSI). Topologically, residues 28 to 344 (RRQQPKSLKD…DYLHRIRANA (317 aa)) are cytoplasmic. Disordered regions lie at residues 75-94 (VRKASESQTPEAPAVNPYLK) and 108-139 (QFKQEPSMAQPDFSLQSPSVDEPHRGTKASRQ).

This sequence belongs to the ZipA family. As to quaternary structure, interacts with FtsZ via their C-terminal domains.

It localises to the cell inner membrane. In terms of biological role, essential cell division protein that stabilizes the FtsZ protofilaments by cross-linking them and that serves as a cytoplasmic membrane anchor for the Z ring. Also required for the recruitment to the septal ring of downstream cell division proteins. The sequence is that of Cell division protein ZipA from Shewanella oneidensis (strain ATCC 700550 / JCM 31522 / CIP 106686 / LMG 19005 / NCIMB 14063 / MR-1).